The sequence spans 212 residues: LexA repressor (212 aa).

The segment at residues 26–46 (VREIGEAVGLSSTSTVHGHID) is a DNA-binding region (H-T-H motif). Active-site for autocatalytic cleavage activity residues include Ser-128 and Lys-171.

The protein belongs to the peptidase S24 family. As to quaternary structure, homodimer.

The enzyme catalyses Hydrolysis of Ala-|-Gly bond in repressor LexA.. Its function is as follows. Represses a number of genes involved in the response to DNA damage (SOS response), including recA and lexA. In the presence of single-stranded DNA, RecA interacts with LexA causing an autocatalytic cleavage which disrupts the DNA-binding part of LexA, leading to derepression of the SOS regulon and eventually DNA repair. This is LexA repressor from Oenococcus oeni (strain ATCC BAA-331 / PSU-1).